The sequence spans 465 residues: UDP-N-acetylmuramoylalanine--D-glutamate ligase (465 aa).

112–118 is a binding site for ATP; it reads GTDGKTT.

The protein belongs to the MurCDEF family.

The protein localises to the cytoplasm. The enzyme catalyses UDP-N-acetyl-alpha-D-muramoyl-L-alanine + D-glutamate + ATP = UDP-N-acetyl-alpha-D-muramoyl-L-alanyl-D-glutamate + ADP + phosphate + H(+). It participates in cell wall biogenesis; peptidoglycan biosynthesis. In terms of biological role, cell wall formation. Catalyzes the addition of glutamate to the nucleotide precursor UDP-N-acetylmuramoyl-L-alanine (UMA). This chain is UDP-N-acetylmuramoylalanine--D-glutamate ligase, found in Chlorobium limicola (strain DSM 245 / NBRC 103803 / 6330).